The chain runs to 396 residues: Elongation factor Tu (396 aa).

The region spanning 10–206 (KPHVNVGTIG…ALDSYIPEPT (197 aa)) is the tr-type G domain. Residues 19–26 (GHVDHGKT) form a G1 region. 19–26 (GHVDHGKT) is a binding site for GTP. T26 is a Mg(2+) binding site. The segment at 60 to 64 (GITIS) is G2. The segment at 81–84 (DCPG) is G3. GTP is bound by residues 81-85 (DCPGH) and 136-139 (NKAD). The G4 stretch occupies residues 136–139 (NKAD). The tract at residues 174-176 (SAL) is G5.

Belongs to the TRAFAC class translation factor GTPase superfamily. Classic translation factor GTPase family. EF-Tu/EF-1A subfamily. Monomer.

The protein resides in the cytoplasm. It carries out the reaction GTP + H2O = GDP + phosphate + H(+). In terms of biological role, GTP hydrolase that promotes the GTP-dependent binding of aminoacyl-tRNA to the A-site of ribosomes during protein biosynthesis. The sequence is that of Elongation factor Tu from Hydrogenovibrio crunogenus (strain DSM 25203 / XCL-2) (Thiomicrospira crunogena).